Consider the following 294-residue polypeptide: Putative lipid kinase SP_1045 (294 aa).

One can recognise a DAGKc domain in the interval 1–131 (MKKAMVIINP…IDIGKANDNY (131 aa)). ATP-binding positions include 9–13 (NPTSG), T40, 66–72 (GDGTVNE), and T93. The Mg(2+) site is built by D212 and Y214. D269 serves as the catalytic Proton acceptor.

Belongs to the diacylglycerol/lipid kinase family. The cofactor is Mg(2+).

Functionally, may catalyze the ATP-dependent phosphorylation of lipids other than diacylglycerol (DAG). In fact, is not able to exhibit diacylglycerol kinase activity in vitro. This Streptococcus pneumoniae serotype 4 (strain ATCC BAA-334 / TIGR4) protein is Putative lipid kinase SP_1045.